The chain runs to 471 residues: Tryptophanase (471 aa).

An N6-acetyllysine mark is found at K5, K115, and K156. Residue K270 is modified to N6-(pyridoxal phosphate)lysine. At K450 the chain carries N6-acetyllysine.

Belongs to the beta-eliminating lyase family. Homotetramer. It depends on pyridoxal 5'-phosphate as a cofactor.

The catalysed reaction is L-tryptophan + H2O = indole + pyruvate + NH4(+). Its pathway is amino-acid degradation; L-tryptophan degradation via pyruvate pathway; indole and pyruvate from L-tryptophan: step 1/1. This chain is Tryptophanase (tnaA), found in Escherichia coli O157:H7.